The chain runs to 1187 residues: Phospholipid-transporting ATPase IH (1187 aa).

The Cytoplasmic segment spans residues 1–61; it reads MDCSLLRTLV…SSKYTFWNFI (61 aa). The chain crosses the membrane as a helical span at residues 62 to 82; the sequence is PKNLFEQFRRIANFYFLIIFL. The Extracellular segment spans residues 83–88; that stretch reads VQLIID. Residues 89 to 110 form a helical membrane-spanning segment; the sequence is TPTSPVTSGLPLFFVITVTAIK. The Cytoplasmic segment spans residues 111–296; that stretch reads QGYEDWLRHK…SAVEKSMNTF (186 aa). Residues 297–318 traverse the membrane as a helical segment; it reads LIVYLCILVSKALINTVLKYVW. The Extracellular segment spans residues 319–349; sequence QSEPFRDEPWYNEKTESERQRNLFLRAFTDF. The helical transmembrane segment at 350 to 372 threads the bilayer; sequence LAFMVLFNYIIPVSMYVTVEMQK. The Cytoplasmic portion of the chain corresponds to 373 to 884; sequence FLGSYFITWD…GHFYYIRISE (512 aa). The active-site 4-aspartylphosphate intermediate is the Asp-414. The ATP site is built by Asp-414, Lys-415, Thr-416, Glu-513, Phe-555, Lys-578, Arg-609, Thr-689, Gly-690, and Asp-691. Asp-414 lines the Mg(2+) pocket. Thr-416 provides a ligand contact to Mg(2+). Ser-740 is modified (phosphoserine). The ATP site is built by Arg-801 and Lys-807. Position 828 (Asp-828) interacts with Mg(2+). ATP contacts are provided by Asn-831 and Asp-832. Position 832 (Asp-832) interacts with Mg(2+). The helical transmembrane segment at 885–905 threads the bilayer; it reads LVQYFFYKNVCFIFPQFLYQF. Topologically, residues 906–917 are extracellular; that stretch reads FCGFSQQTLYDT. Residues 918 to 937 traverse the membrane as a helical segment; that stretch reads AYLTLYNISFTSLPILLYSL. The Cytoplasmic segment spans residues 938 to 967; the sequence is MEQHVGIDVLKRDPTLYRDIAKNALLRWRV. A helical membrane pass occupies residues 968–989; it reads FIYWTFLGVFDALVFFFGAYFI. At 990–1003 the chain is on the extracellular side; that stretch reads FENTTVTINGQMFG. Residues 1004-1026 traverse the membrane as a helical segment; sequence NWTFGTLVFTVMVLTVTLKLALD. Residues 1027 to 1032 are Cytoplasmic-facing; sequence THYWTW. The chain crosses the membrane as a helical span at residues 1033–1053; it reads INHFVIWGSLLFYIAFSLLWG. Residues 1054–1071 lie on the Extracellular side of the membrane; that stretch reads GVIWPFLSYQRMYYVFIS. The helical transmembrane segment at 1072-1096 threads the bilayer; sequence MLSSGPAWLGIILLVTVGLLPDVLK. Topologically, residues 1097–1138 are cytoplasmic; sequence KVLCRQLWPTATERTQNIQHQDSISEFTPLASLPSWGAQGSR. A phosphoserine mark is found at Ser-1148 and Ser-1158.

This sequence belongs to the cation transport ATPase (P-type) (TC 3.A.3) family. Type IV subfamily. In terms of assembly, component of a P4-ATPase flippase complex which consists of a catalytic alpha subunit ATP11A and an accessory beta subunit TMEM30A. It depends on Mg(2+) as a cofactor. In terms of processing, proteolytically cleaved by CASP3. In terms of tissue distribution, widely expressed. Expressed in myoblasts. Expressed in retina, brain, liver, testes and kidney (at protein level). Expressed in the inner ear.

It is found in the cell membrane. The protein localises to the early endosome. Its subcellular location is the recycling endosome. It localises to the endoplasmic reticulum membrane. The enzyme catalyses ATP + H2O + phospholipidSide 1 = ADP + phosphate + phospholipidSide 2.. It catalyses the reaction a 1,2-diacyl-sn-glycero-3-phospho-L-serine(out) + ATP + H2O = a 1,2-diacyl-sn-glycero-3-phospho-L-serine(in) + ADP + phosphate + H(+). It carries out the reaction a 1,2-diacyl-sn-glycero-3-phosphoethanolamine(out) + ATP + H2O = a 1,2-diacyl-sn-glycero-3-phosphoethanolamine(in) + ADP + phosphate + H(+). Functionally, catalytic component of a P4-ATPase flippase complex which catalyzes the hydrolysis of ATP coupled to the transport of aminophospholipids, phosphatidylserines (PS) and phosphatidylethanolamines (PE), from the outer to the inner leaflet of the plasma membrane. Does not show flippase activity toward phosphatidylcholine (PC). Contributes to the maintenance of membrane lipid asymmetry with a specific role in morphogenesis of muscle cells. In myoblasts, mediates PS enrichment at the inner leaflet of plasma membrane, triggering PIEZO1-dependent Ca2+ influx and Rho GTPases signal transduction, subsequently leading to the assembly of cortical actomyosin fibers and myotube formation. In Mus musculus (Mouse), this protein is Phospholipid-transporting ATPase IH (Atp11a).